The primary structure comprises 513 residues: Anthranilate synthase component 1 (513 aa).

L-tryptophan-binding positions include S50 and 279–281 (PYM). 314–315 (GT) is a binding site for chorismate. E341 contacts Mg(2+). Chorismate is bound by residues Y429, R449, 463 to 465 (GAG), and G465. E478 is a Mg(2+) binding site.

Belongs to the anthranilate synthase component I family. As to quaternary structure, heterotetramer consisting of two non-identical subunits: a beta subunit (TrpG) and a large alpha subunit (TrpE). It depends on Mg(2+) as a cofactor.

The catalysed reaction is chorismate + L-glutamine = anthranilate + pyruvate + L-glutamate + H(+). It participates in amino-acid biosynthesis; L-tryptophan biosynthesis; L-tryptophan from chorismate: step 1/5. With respect to regulation, feedback inhibited by tryptophan. In terms of biological role, part of a heterotetrameric complex that catalyzes the two-step biosynthesis of anthranilate, an intermediate in the biosynthesis of L-tryptophan. In the first step, the glutamine-binding beta subunit (TrpG) of anthranilate synthase (AS) provides the glutamine amidotransferase activity which generates ammonia as a substrate that, along with chorismate, is used in the second step, catalyzed by the large alpha subunit of AS (TrpE) to produce anthranilate. In the absence of TrpG, TrpE can synthesize anthranilate directly from chorismate and high concentrations of ammonia. The chain is Anthranilate synthase component 1 (trpE) from Bacillus pumilus (Bacillus mesentericus).